The following is a 333-amino-acid chain: Ribosomal RNA small subunit methyltransferase C (333 aa).

Belongs to the methyltransferase superfamily. RsmC family. Monomer.

It is found in the cytoplasm. The enzyme catalyses guanosine(1207) in 16S rRNA + S-adenosyl-L-methionine = N(2)-methylguanosine(1207) in 16S rRNA + S-adenosyl-L-homocysteine + H(+). Functionally, specifically methylates the guanine in position 1207 of 16S rRNA in the 30S particle. This Mannheimia succiniciproducens (strain KCTC 0769BP / MBEL55E) protein is Ribosomal RNA small subunit methyltransferase C.